We begin with the raw amino-acid sequence, 295 residues long: DegV domain-containing protein MG326 (295 aa).

In terms of domain architecture, DegV spans threonine 4 to isoleucine 292. Residues threonine 63 and serine 95 each coordinate hexadecanoate.

May bind long-chain fatty acids, such as palmitate, and may play a role in lipid transport or fatty acid metabolism. This is DegV domain-containing protein MG326 from Mycoplasma genitalium (strain ATCC 33530 / DSM 19775 / NCTC 10195 / G37) (Mycoplasmoides genitalium).